Here is a 226-residue protein sequence, read N- to C-terminus: Ribose-5-phosphate isomerase A (226 aa).

Residues 29 to 32 (TGST), 84 to 87 (DGAD), and 97 to 100 (KGGG) contribute to the substrate site. Glu106 serves as the catalytic Proton acceptor. Position 124 (Lys124) interacts with substrate.

This sequence belongs to the ribose 5-phosphate isomerase family. In terms of assembly, homodimer.

The catalysed reaction is aldehydo-D-ribose 5-phosphate = D-ribulose 5-phosphate. It participates in carbohydrate degradation; pentose phosphate pathway; D-ribose 5-phosphate from D-ribulose 5-phosphate (non-oxidative stage): step 1/1. Its function is as follows. Catalyzes the reversible conversion of ribose-5-phosphate to ribulose 5-phosphate. This Methanothermobacter thermautotrophicus (strain ATCC 29096 / DSM 1053 / JCM 10044 / NBRC 100330 / Delta H) (Methanobacterium thermoautotrophicum) protein is Ribose-5-phosphate isomerase A.